A 498-amino-acid polypeptide reads, in one-letter code: Putative antiporter subunit mnhD2 (498 aa).

14 helical membrane-spanning segments follow: residues 2–22, 32–52, 78–98, 108–128, 130–150, 161–181, 209–229, 240–260, 271–291, 308–328, 330–350, 368–388, 403–423, and 450–470; these read LSNL…ILVF, YLYL…LIYV, LSLI…AYGF, YHLP…FLTS, LFNL…LITL, IIYV…IGLL, ISLI…FMWL, LAAL…IRFF, IHPL…IGVI, IGFI…GAIF, LVND…LVYI, FFGV…PFSG, GNYI…YSLF, and GILS…PVLL.

Belongs to the CPA3 antiporters (TC 2.A.63) subunit D family. May form a heterooligomeric complex that consists of seven subunits: mnhA2, mnhB2, mnhC2, mnhD2, mnhE2, mnhF2 and mnhG2.

The protein localises to the cell membrane. This is Putative antiporter subunit mnhD2 (mnhD2) from Staphylococcus aureus (strain MRSA252).